Consider the following 613-residue polypeptide: Spastin (613 aa).

The disordered stretch occupies residues 1-42 (MNSPGGRGKKKGSAGSSSAPPAAGASPSAPSGPAPPAPPAGA). Topologically, residues 1-61 (MNSPGGRGKK…KRNLYYFSYP (61 aa)) are cytoplasmic. Over residues 13 to 29 (SAGSSSAPPAAGASPSA) the composition is skewed to low complexity. Residues 30–39 (PSGPAPPAPP) are compositionally biased toward pro residues. The helical intramembrane region spans 62–82 (LFAAFALLRFVAFQLGLLVAW). The Cytoplasmic segment spans residues 83 to 613 (LCERLSRGAL…WNKDFGDTTV (531 aa)). In terms of domain architecture, MIT spans 117 to 192 (HKRAFECISM…AMAKDRLQLL (76 aa)). Positions 224-312 (SESGAVPKKK…PAARKKKDTK (89 aa)) are disordered. Composition is skewed to polar residues over residues 237-257 (THTS…STGL), 264-274 (PSYSGISTASV), and 281-299 (PATS…NKPS). 379 to 386 (GPPGNGKT) contacts ATP.

Belongs to the AAA ATPase family. Spastin subfamily. As to quaternary structure, homohexamer. The homohexamer is stabilized by ATP-binding. The homohexamer may adopt a ring conformation through which microtubules pass prior to being severed. Interacts with microtubules.

It is found in the membrane. The protein resides in the cytoplasm. Its subcellular location is the cytoskeleton. The protein localises to the microtubule organizing center. It localises to the centrosome. It is found in the perinuclear region. The protein resides in the nucleus. The enzyme catalyses n ATP + n H2O + a microtubule = n ADP + n phosphate + (n+1) alpha/beta tubulin heterodimers.. Its function is as follows. ATP-dependent microtubule severing protein that specifically recognizes and cuts microtubules that are polyglutamylated. Preferentially recognizes and acts on microtubules decorated with short polyglutamate tails: severing activity increases as the number of glutamates per tubulin rises from one to eight, but decreases beyond this glutamylation threshold. Microtubule severing promotes reorganization of cellular microtubule arrays and the release of microtubules from the centrosome following nucleation. Required for membrane traffic from the endoplasmic reticulum (ER) to the Golgi and for completion of the abscission stage of cytokinesis. Also plays a role in axon growth and the formation of axonal branches. The sequence is that of Spastin from Gallus gallus (Chicken).